The following is a 454-amino-acid chain: MEVIRSQKRTVSNDVVSTPTLPLYLTAPHMEVRLEEFELFAIDRLRVLKGVSDGLARARNPNEMDDLVETLWKEHMRLSNVSEMINKDIISHFVLRLVYCRSDELKKWFLSMETALFRHRFRLKKIEEQRAIVGEFGLPYKAVIGAELESLKERLGLVARSHGQISSDVENIYYKVPFEEVPDLVASRRVLLQKGFAFVAGTQLVSLVVTQFRSHLSKALILTNRKWTTTIREREKDRLTPIVEALSTSYLGPDYSQSNEYADISLKDIDQVSKSSFPLCMRHLFEKLREDHHLKHGGRMQLGLFLKGVGLKLDDALAFWREEFTKKVGSERFDKEYAYAIRHNYGKEGKRTDYTPYACSKIITSAPGAGDHHGCPYRHFSEDNLKAALSRMGLSSRGMEDVMDKVRNRHYQLACTLTFEAVYGTSCDTGINHPNQYFEESQKILKSKTPAAPV.

[4Fe-4S] cluster-binding residues include C280, C359, C375, and C415.

Belongs to the eukaryotic-type primase large subunit family. As to quaternary structure, heterodimer of a small subunit and a large subunit. [4Fe-4S] cluster is required as a cofactor.

Functionally, DNA primase is the polymerase that synthesizes small RNA primers for the Okazaki fragments made during discontinuous DNA replication. This is Probable DNA primase large subunit from Arabidopsis thaliana (Mouse-ear cress).